A 252-amino-acid chain; its full sequence is Ribosomal RNA small subunit methyltransferase J (252 aa).

S-adenosyl-L-methionine contacts are provided by residues 101-102 (RD), 117-118 (ER), 153-154 (SS), and aspartate 171.

Belongs to the methyltransferase superfamily. RsmJ family.

The protein resides in the cytoplasm. The enzyme catalyses guanosine(1516) in 16S rRNA + S-adenosyl-L-methionine = N(2)-methylguanosine(1516) in 16S rRNA + S-adenosyl-L-homocysteine + H(+). Specifically methylates the guanosine in position 1516 of 16S rRNA. This chain is Ribosomal RNA small subunit methyltransferase J, found in Salmonella choleraesuis (strain SC-B67).